The sequence spans 313 residues: MLDNVLRIATRQSPLALWQAHYVKDKLMASHPGLVVELVPMVTRGDVILDTPLAKVGGKGLFVKELEVALLENRADIAVHSMKDVPVEFPQGLGLVTICEREDPRDAFVSNTYDSLDALPAGSIVGTSSLRRQCQLAERRPDLIIRSLRGNVGTRLSKLDNGEYDAIILAVAGLKRLGLESRIRAALPPEISLPAVGQGAVGIECRLDDARTRELLAALNHHETALRVTAERAMNTRLEGGCQVPIGSYAELIDGEIWLRALVGAPDGSQIIRGERRGAPQDAEQMGISLAEELLNNGAREILAEVYNGDAPA.

C242 bears the S-(dipyrrolylmethanemethyl)cysteine mark.

Belongs to the HMBS family. As to quaternary structure, monomer. Dipyrromethane serves as cofactor.

The catalysed reaction is 4 porphobilinogen + H2O = hydroxymethylbilane + 4 NH4(+). It participates in porphyrin-containing compound metabolism; protoporphyrin-IX biosynthesis; coproporphyrinogen-III from 5-aminolevulinate: step 2/4. In terms of biological role, tetrapolymerization of the monopyrrole PBG into the hydroxymethylbilane pre-uroporphyrinogen in several discrete steps. The sequence is that of Porphobilinogen deaminase from Escherichia coli O6:H1 (strain CFT073 / ATCC 700928 / UPEC).